The chain runs to 122 residues: Holo-[acyl-carrier-protein] synthase (122 aa).

Mg(2+) is bound by residues D8 and E57.

The protein belongs to the P-Pant transferase superfamily. AcpS family. Requires Mg(2+) as cofactor.

The protein resides in the cytoplasm. It carries out the reaction apo-[ACP] + CoA = holo-[ACP] + adenosine 3',5'-bisphosphate + H(+). Functionally, transfers the 4'-phosphopantetheine moiety from coenzyme A to a Ser of acyl-carrier-protein. This is Holo-[acyl-carrier-protein] synthase from Exiguobacterium sp. (strain ATCC BAA-1283 / AT1b).